Reading from the N-terminus, the 161-residue chain is Arachidonate 5-lipoxygenase-activating protein (161 aa).

Topologically, residues 1-8 (MDQEAVGN) are lumenal. Residues 9 to 30 (VVLLAIVTLISVVQNAFFAHKV) traverse the membrane as a helical segment. The Cytoplasmic segment spans residues 31–52 (ELESKAQSGRSFQRTGTLAFER). The chain crosses the membrane as a helical span at residues 53–77 (VYTANQNCVDAYPTFLVVLWTAGLL). Residues 78–80 (CSQ) lie on the Lumenal side of the membrane. Residues 81-102 (VPAAFAGLMYLFVRQKYFVGYL) traverse the membrane as a helical segment. Residues 103 to 107 (GERTQ) are Cytoplasmic-facing. An intramembrane segment occupies 108 to 115 (STPGYIFG). The helical transmembrane segment at 116 to 128 (KRIILFLFLMSLA) threads the bilayer. The Lumenal portion of the chain corresponds to 129–161 (GILNHYLIFFFGSDFENYIRTITTTISPLLLIP).

Belongs to the MAPEG family. Homotrimer. Interacts with LTC4S and ALOX5.

It is found in the nucleus membrane. The protein localises to the endoplasmic reticulum membrane. Its function is as follows. Required for leukotriene biosynthesis by ALOX5 (5-lipoxygenase). Anchors ALOX5 to the membrane. Binds arachidonic acid, and could play an essential role in the transfer of arachidonic acid to ALOX5. Binds to MK-886, a compound that blocks the biosynthesis of leukotrienes. In Rattus norvegicus (Rat), this protein is Arachidonate 5-lipoxygenase-activating protein (Alox5ap).